The sequence spans 299 residues: ATP phosphoribosyltransferase (299 aa).

This sequence belongs to the ATP phosphoribosyltransferase family. Long subfamily. Equilibrium between an active dimeric form, an inactive hexameric form and higher aggregates. Interconversion between the various forms is largely reversible and is influenced by the natural substrates and inhibitors of the enzyme. Mg(2+) serves as cofactor.

Its subcellular location is the cytoplasm. The enzyme catalyses 1-(5-phospho-beta-D-ribosyl)-ATP + diphosphate = 5-phospho-alpha-D-ribose 1-diphosphate + ATP. The protein operates within amino-acid biosynthesis; L-histidine biosynthesis; L-histidine from 5-phospho-alpha-D-ribose 1-diphosphate: step 1/9. Feedback inhibited by histidine. Its function is as follows. Catalyzes the condensation of ATP and 5-phosphoribose 1-diphosphate to form N'-(5'-phosphoribosyl)-ATP (PR-ATP). Has a crucial role in the pathway because the rate of histidine biosynthesis seems to be controlled primarily by regulation of HisG enzymatic activity. In Escherichia coli O81 (strain ED1a), this protein is ATP phosphoribosyltransferase.